Reading from the N-terminus, the 599-residue chain is Elongation factor 4 (599 aa).

One can recognise a tr-type G domain in the interval 5–187; that stretch reads SHIRNFSIIA…RLVQTIPAPT (183 aa). Residues 17-22 and 134-137 contribute to the GTP site; these read DHGKST and NKMD.

It belongs to the TRAFAC class translation factor GTPase superfamily. Classic translation factor GTPase family. LepA subfamily.

The protein localises to the cell inner membrane. The enzyme catalyses GTP + H2O = GDP + phosphate + H(+). Functionally, required for accurate and efficient protein synthesis under certain stress conditions. May act as a fidelity factor of the translation reaction, by catalyzing a one-codon backward translocation of tRNAs on improperly translocated ribosomes. Back-translocation proceeds from a post-translocation (POST) complex to a pre-translocation (PRE) complex, thus giving elongation factor G a second chance to translocate the tRNAs correctly. Binds to ribosomes in a GTP-dependent manner. In Ectopseudomonas mendocina (strain ymp) (Pseudomonas mendocina), this protein is Elongation factor 4.